The sequence spans 1029 residues: MTMITPSFPGNSLAVVLQRRDWENPGVTQLNRLAAHPPFASWRNSEEARTDRPSQQLRSLNGEWRFAWFPAPEAVPESWLECDLPEADTVVVPSNWQMHGYDAPIYTNVTYPITVNPPFVPTENPTGCYSLTFNVDESWLQEGQTRIIFDGVNSAFHLWCNGRWVGYGQDSRLPSEFDLSAFLRAGENRLAVMVLRWSDGSYLEDQDMWRMSGIFRDVSLLHKPTTQISDFHVATRFNDDFSRAVLEAEVQMCGELRDYLRVTVSLWQGETQVASGTAPFGGEIIDERGGYADRVTLRLNVENPKLWSAEIPNLYRAVVELHTADGTLIEAEACDVGFREVRIENGLLLLNGKPLLIRGVNRHEHHPLHGQVMDEQTMVQDILLMKQNNFNAVRCSHYPNHPLWYTLCDRYGLYVVDEANIETHGMVPMNRLTDDPRWLPAMSERVTRMVQRDRNHPSVIIWSLGNESGHGANHDALYRWIKSVDPSRPVQYEGGGADTTATDIICPMYARVDEDQPFPAVPKWSIKKWLSLPGETRPLILCEYAHAMGNSLGGFAKYWQAFRQYPRLQGGFVWDWVDQSLIKYDENGNPWSAYGGDFGDTPNDRQFCMNGLVFADRTPHPALTEAKHQQQFFQFRLSGQTIEVTSEYLFRHSDNELLHWMVALDGKPLASGEVPLDVAPQGKQLIELPELPQPESAGQLWLTVRVVQPNATAWSEAGHISAWQQWRLAENLSVTLPAASHAIPHLTTSEMDFCIELGNKRWQFNRQSGFLSQMWIGDKKQLLTPLRDQFTRAPLDNDIGVSEATRIDPNAWVERWKAAGHYQAEAALLQCTADTLADAVLITTAHAWQHQGKTLFISRKTYRIDGSGQMAITVDVEVASDTPHPARIGLNCQLAQVAERVNWLGLGPQENYPDRLTAACFDRWDLPLSDMYTPYVFPSENGLRCGTRELNYGPHQWRGDFQFNISRYSQQQLMETSHRHLLHAEEGTWLNIDGFHMGIGGDDSWSPSVSAEFQLSAGRYHYQLVWCQK.

Substrate is bound by residues asparagine 108 and aspartate 207. Residue aspartate 207 participates in Na(+) binding. Residues glutamate 422, histidine 424, and glutamate 467 each contribute to the Mg(2+) site. Substrate is bound by residues glutamate 467 and 543-546 (EYAH). Glutamate 467 functions as the Proton donor in the catalytic mechanism. The Nucleophile role is filled by glutamate 543. Position 603 (asparagine 603) interacts with Mg(2+). Na(+) is bound by residues phenylalanine 607 and asparagine 610. Substrate is bound by residues asparagine 610 and tryptophan 1005.

It belongs to the glycosyl hydrolase 2 family. Homotetramer. It depends on Mg(2+) as a cofactor. Na(+) is required as a cofactor.

It catalyses the reaction Hydrolysis of terminal non-reducing beta-D-galactose residues in beta-D-galactosides.. This is Beta-galactosidase from Escherichia coli.